We begin with the raw amino-acid sequence, 154 residues long: Endoribonuclease YbeY (154 aa).

Positions 114, 118, and 124 each coordinate Zn(2+).

The protein belongs to the endoribonuclease YbeY family. Zn(2+) serves as cofactor.

It is found in the cytoplasm. Functionally, single strand-specific metallo-endoribonuclease involved in late-stage 70S ribosome quality control and in maturation of the 3' terminus of the 16S rRNA. The chain is Endoribonuclease YbeY from Haemophilus influenzae (strain 86-028NP).